The following is a 530-amino-acid chain: 4-alpha-glucanotransferase (530 aa).

This sequence belongs to the disproportionating enzyme family.

The protein localises to the cytoplasm. It catalyses the reaction Transfers a segment of a (1-&gt;4)-alpha-D-glucan to a new position in an acceptor, which may be glucose or a (1-&gt;4)-alpha-D-glucan.. The sequence is that of 4-alpha-glucanotransferase (malQ) from Chlamydia caviae (strain ATCC VR-813 / DSM 19441 / 03DC25 / GPIC) (Chlamydophila caviae).